We begin with the raw amino-acid sequence, 207 residues long: 2,3-bisphosphoglycerate-dependent phosphoglycerate mutase (207 aa).

Residues 10–17 (RHGQSEWN), 23–24 (TG), Arg62, 89–92 (ERDY), Lys100, 116–117 (RR), and 160–161 (GN) contribute to the substrate site. His11 serves as the catalytic Tele-phosphohistidine intermediate. Glu89 functions as the Proton donor/acceptor in the catalytic mechanism.

It belongs to the phosphoglycerate mutase family. BPG-dependent PGAM subfamily. In terms of assembly, homodimer.

It carries out the reaction (2R)-2-phosphoglycerate = (2R)-3-phosphoglycerate. Its pathway is carbohydrate degradation; glycolysis; pyruvate from D-glyceraldehyde 3-phosphate: step 3/5. In terms of biological role, catalyzes the interconversion of 2-phosphoglycerate and 3-phosphoglycerate. The protein is 2,3-bisphosphoglycerate-dependent phosphoglycerate mutase of Xanthobacter autotrophicus (strain ATCC BAA-1158 / Py2).